Consider the following 520-residue polypeptide: GMP synthase [glutamine-hydrolyzing] (520 aa).

A Glutamine amidotransferase type-1 domain is found at Thr-9 to Asp-202. The active-site Nucleophile is the Cys-86. Residues His-176 and Glu-178 contribute to the active site. The region spanning Trp-203–Arg-395 is the GMPS ATP-PPase domain. Ser-230–Ser-236 contacts ATP.

In terms of assembly, homodimer.

The enzyme catalyses XMP + L-glutamine + ATP + H2O = GMP + L-glutamate + AMP + diphosphate + 2 H(+). Its pathway is purine metabolism; GMP biosynthesis; GMP from XMP (L-Gln route): step 1/1. Catalyzes the synthesis of GMP from XMP. This Mesorhizobium japonicum (strain LMG 29417 / CECT 9101 / MAFF 303099) (Mesorhizobium loti (strain MAFF 303099)) protein is GMP synthase [glutamine-hydrolyzing].